The primary structure comprises 201 residues: Large ribosomal subunit protein bL25 (201 aa).

The segment at 179–201 (VSITAPRVEAEKTEEEEPESTEE) is disordered. Residues 190 to 201 (KTEEEEPESTEE) are compositionally biased toward acidic residues.

This sequence belongs to the bacterial ribosomal protein bL25 family. CTC subfamily. Part of the 50S ribosomal subunit; part of the 5S rRNA/L5/L18/L25 subcomplex. Contacts the 5S rRNA. Binds to the 5S rRNA independently of L5 and L18.

Functionally, this is one of the proteins that binds to the 5S RNA in the ribosome where it forms part of the central protuberance. The protein is Large ribosomal subunit protein bL25 of Prosthecochloris aestuarii (strain DSM 271 / SK 413).